The primary structure comprises 201 residues: Glutathione S-transferase GstA (201 aa).

One can recognise a GST N-terminal domain in the interval Met-1–Gln-81. Glutathione contacts are provided by residues Cys-10, Lys-35, Val-52, Glu-65–Gly-66, Asn-99, and Thr-103–His-106. The GST C-terminal domain occupies Asn-87–Lys-201.

It belongs to the GST superfamily. Beta family. Homodimer.

It is found in the cytoplasm. It carries out the reaction RX + glutathione = an S-substituted glutathione + a halide anion + H(+). Its function is as follows. Conjugation of reduced glutathione to a wide number of exogenous and endogenous hydrophobic electrophiles. The sequence is that of Glutathione S-transferase GstA (gstA) from Escherichia coli O157:H7.